A 126-amino-acid polypeptide reads, in one-letter code: Protein C10 (126 aa).

Residue Ala2 is modified to N-acetylalanine.

It belongs to the UPF0456 family. As to expression, ubiquitously expressed, with higher expression in lung.

Its subcellular location is the cytoplasm. Functionally, in brain, may be required for corpus callosum development. The protein is Protein C10 (Grcc10) of Mus musculus (Mouse).